The following is a 376-amino-acid chain: Transmembrane protein 43 homolog (376 aa).

Residues 1–10 are Cytoplasmic-facing; it reads MASLSETLRS. A helical membrane pass occupies residues 11–31; sequence HWPIALFGVILFVAGGTELYW. The Lumenal segment spans residues 32-277; that stretch reads NEGRAVHNMM…EVFRLEARAQ (246 aa). The helical transmembrane segment at 278–298 threads the bilayer; sequence VLHTWWWRFVGWLLIFFGVTC. At 299 to 323 the chain is on the cytoplasmic side; that stretch reads NTKILRLLFVRVPLLVALAPDPQFP. Helical transmembrane passes span 324–344 and 345–365; these read VTGN…VAWI and LHRP…YVWF. Topologically, residues 366–376 are cytoplasmic; sequence TRNLVDYHRLD.

The protein belongs to the TMEM43 family.

The protein localises to the endoplasmic reticulum membrane. It is found in the nucleus envelope. In terms of biological role, involved in lipid metabolism and utilization. The polypeptide is Transmembrane protein 43 homolog (Drosophila melanogaster (Fruit fly)).